The sequence spans 246 residues: tRNA (guanine-N(7)-)-methyltransferase (246 aa).

A disordered region spans residues 1 to 26; it reads MIENPSPSAANLPEHPSTDASHPRNI. S-adenosyl-L-methionine is bound by residues glutamate 75, glutamate 100, aspartate 127, and aspartate 150. Aspartate 150 is an active-site residue. Lysine 154 is a substrate binding site. An interaction with RNA region spans residues 156–161; sequence KHNKRR. Residues aspartate 186 and 225–228 contribute to the substrate site; that span reads TKFE.

This sequence belongs to the class I-like SAM-binding methyltransferase superfamily. TrmB family.

It catalyses the reaction guanosine(46) in tRNA + S-adenosyl-L-methionine = N(7)-methylguanosine(46) in tRNA + S-adenosyl-L-homocysteine. It participates in tRNA modification; N(7)-methylguanine-tRNA biosynthesis. Its function is as follows. Catalyzes the formation of N(7)-methylguanine at position 46 (m7G46) in tRNA. This chain is tRNA (guanine-N(7)-)-methyltransferase, found in Polaromonas sp. (strain JS666 / ATCC BAA-500).